A 238-amino-acid chain; its full sequence is Survival of motor neuron-related-splicing factor 30 (238 aa).

A Tudor domain is found at 72–132; sequence SWKVGDKCMA…KPVEEGRKAK (61 aa). A Nuclear localization signal motif is present at residues 142–160; it reads KKEMIAQQREYKKKKALKK. Serine 201 is subject to Phosphoserine. Residue lysine 219 is modified to N6-acetyllysine.

It belongs to the SMN family. As to quaternary structure, associates with spliceosomes. Associates with U4/U5/U6 tri-snRNP and with U2 snRNP.

The protein resides in the nucleus speckle. Its subcellular location is the nucleus. It localises to the cajal body. Functionally, involved in spliceosome assembly. In Bos taurus (Bovine), this protein is Survival of motor neuron-related-splicing factor 30 (SMNDC1).